A 128-amino-acid polypeptide reads, in one-letter code: Kinetoplast-associated protein 4 (128 aa).

Residues 1–10 (MLRFVPRRLA) constitute a propeptide that is removed on maturation. Residues 60-87 (AHPGFKRKEKEPKELKAAKAAKTSTPRA) form a disordered region. The segment covering 65–76 (KRKEKEPKELKA) has biased composition (basic and acidic residues).

This sequence belongs to the KAP family. As to quaternary structure, associates with the kinetoplast DNA network.

It localises to the mitochondrion matrix. The protein localises to the kinetoplast. Histone H1-like DNA-binding protein involved in the organization and segregation of kinetoplast DNA (kDNA). The mitochondrial DNA of kinetoplastid protozoa consists of about 5,000 minicircles and 20 to 30 maxicircles. These circular DNAs are held together by catenation into a highly organized compact disk structure referred to as a kinetoplast DNA (kDNA) network. Binds preferentially to a specific fragment of minicircle DNA and is able to compact kDNA networks through DNA charge neutralization and condensation. The chain is Kinetoplast-associated protein 4 (KAP4) from Crithidia fasciculata.